The sequence spans 253 residues: Phosphate import ATP-binding protein PstB 3 (253 aa).

In terms of domain architecture, ABC transporter spans 8–248 (LVINNLDLYY…PQDERTENYI (241 aa)). 40 to 47 (GPSGCGKS) serves as a coordination point for ATP.

The protein belongs to the ABC transporter superfamily. Phosphate importer (TC 3.A.1.7) family. In terms of assembly, the complex is composed of two ATP-binding proteins (PstB), two transmembrane proteins (PstC and PstA) and a solute-binding protein (PstS).

Its subcellular location is the cell membrane. It carries out the reaction phosphate(out) + ATP + H2O = ADP + 2 phosphate(in) + H(+). Its function is as follows. Part of the ABC transporter complex PstSACB involved in phosphate import. Responsible for energy coupling to the transport system. This Streptococcus agalactiae serotype III (strain NEM316) protein is Phosphate import ATP-binding protein PstB 3.